The sequence spans 185 residues: Pre-histone-like nucleoprotein (185 aa).

Residue Ser-2 is modified to N-acetylserine; by host. Residues 2 to 23 constitute a propeptide that is removed on maturation; the sequence is SILISPDNNTGWGLCSAGMYGG. Residue Thr-55 is modified to Phosphothreonine; by host. Ser-172 bears the Phosphoserine; by host mark. The Nuclear localization signal motif lies at 175 to 185; the sequence is RVPVRSRPPRS.

This sequence belongs to the adenoviridae histone-like nucleoprotein family. In terms of assembly, interacts with the core-capsid bridging protein; this interaction bridges the virus core to the capsid. Interacts with host NPM1; this interaction might play a role in placing the pre-histone-like nucleoprotein on the viral DNA or regulating viral gene expression. Interacts with host HMGB1; this interaction inhibits host immune response. In terms of processing, cleaved near the N-terminus by the viral protease during virion maturation to form the mature protein.

The protein resides in the virion. The protein localises to the host nucleus. It localises to the host nucleolus. Its function is as follows. Plays a role in the inhibition of host immune response within the nucleus. Interacts with cellular nucleosomes and immobilizes the host immune danger signal HMGB1 on chromatin. In turn, prevents HMGB1 release out of the cell and thus decreases inflammation. Also plays a role in the wrapping and condensation of the viral DNA. May also promote viral genome import into the nucleus. In Human adenovirus F serotype 40 (HAdV-40), this protein is Pre-histone-like nucleoprotein.